A 176-amino-acid polypeptide reads, in one-letter code: NAD(P)H-quinone oxidoreductase subunit 6, chloroplastic (176 aa).

Transmembrane regions (helical) follow at residues 10–30, 32–52, 61–81, 95–115, and 152–172; these read FLLV…VLLT, PIYS…FYIL, AQLL…VMFM, VGSG…ITII, and FFLP…GAIA.

This sequence belongs to the complex I subunit 6 family. In terms of assembly, NDH is composed of at least 16 different subunits, 5 of which are encoded in the nucleus.

Its subcellular location is the plastid. It localises to the chloroplast thylakoid membrane. It carries out the reaction a plastoquinone + NADH + (n+1) H(+)(in) = a plastoquinol + NAD(+) + n H(+)(out). The catalysed reaction is a plastoquinone + NADPH + (n+1) H(+)(in) = a plastoquinol + NADP(+) + n H(+)(out). In terms of biological role, NDH shuttles electrons from NAD(P)H:plastoquinone, via FMN and iron-sulfur (Fe-S) centers, to quinones in the photosynthetic chain and possibly in a chloroplast respiratory chain. The immediate electron acceptor for the enzyme in this species is believed to be plastoquinone. Couples the redox reaction to proton translocation, and thus conserves the redox energy in a proton gradient. This chain is NAD(P)H-quinone oxidoreductase subunit 6, chloroplastic (ndhG), found in Manihot esculenta (Cassava).